Consider the following 392-residue polypeptide: L-rhamnonate dehydratase (392 aa).

Substrate is bound by residues His22 and Arg48. The Mg(2+) site is built by Asp214, Glu240, and Glu268. His318 (proton acceptor) is an active-site residue. Substrate is bound at residue Glu338.

Belongs to the mandelate racemase/muconate lactonizing enzyme family. RhamD subfamily. As to quaternary structure, homooctamer; tetramer of dimers. It depends on Mg(2+) as a cofactor.

It catalyses the reaction L-rhamnonate = 2-dehydro-3-deoxy-L-rhamnonate + H2O. Functionally, catalyzes the dehydration of L-rhamnonate to 2-keto-3-deoxy-L-rhamnonate (KDR). This Paraburkholderia xenovorans (strain LB400) protein is L-rhamnonate dehydratase.